The following is a 75-amino-acid chain: UPF0270 protein PFL_4336 (75 aa).

This sequence belongs to the UPF0270 family.

The sequence is that of UPF0270 protein PFL_4336 from Pseudomonas fluorescens (strain ATCC BAA-477 / NRRL B-23932 / Pf-5).